Consider the following 505-residue polypeptide: MAPINIEGNDFWMIACTVIIVFALVKFMFSKISFYQSANTTEWPAGPKTLPIIGNLHQLGGGVPLQVALANLAKVYGGAFTIWIGSWVPMIVISDIDNAREVLVNKSADYSARDVPDILKIITANGKNIADCDSGPFWHNLKKGLQSCINPSNVMSLSRLQEKDMQNLIKSMQERASQHNGIIKPLDHAKEASMRLLSRVIFGHDFSNEDLVIGVKDALDEMVRISGLASLADAFKIAKYLPSQRKNIRDMYATRDRVYNLIQPHIVPNLPANSFLYFLTSQDYSDEIIYSMVLEIFGLGVDSTAATAVWALSFLVGEQEIQEKLYREINNRTGGQRPVKVVDLKELPYLQAVMKETLRMKPIAPLAVPHVAAKDTTFKGRRIVKGTKVMVNLYAIHHDPNVFPAPYKFMPERFLKDVNSDGRFGDINTMESSLIPFGAGMRICGGVELAKQMVAFALASMVNEFKWDCVSEGKLPDLSEAISFILYMKNPLEAKITPRTKPFRQ.

Residues Asp-10 to Ser-30 traverse the membrane as a helical segment. Heme is bound at residue Cys-444.

This sequence belongs to the cytochrome P450 family. Heme serves as cofactor.

It is found in the endoplasmic reticulum membrane. It carries out the reaction (R)-reticuline + reduced [NADPH--hemoprotein reductase] + O2 = salutaridine + oxidized [NADPH--hemoprotein reductase] + 2 H2O + H(+). In terms of biological role, cytochrome P450 monooxygenase involved in biosynthesis of morphinan-type benzylisoquinoline and opiate alkaloids natural products. Catalyzes the formation of the morphinan alkaloid salutaridine by intramolecular phenol oxidation of (R)-reticuline without the incorporation of oxygen into the product. Can also use (R)-norreticuline as substrate. The sequence is that of Salutaridine synthase from Papaver somniferum (Opium poppy).